The chain runs to 258 residues: Phosphoadenosine 5'-phosphosulfate reductase (258 aa).

C244 acts as the Nucleophile; cysteine thiosulfonate intermediate in catalysis.

It belongs to the PAPS reductase family. CysH subfamily.

Its subcellular location is the cytoplasm. It carries out the reaction [thioredoxin]-disulfide + sulfite + adenosine 3',5'-bisphosphate + 2 H(+) = [thioredoxin]-dithiol + 3'-phosphoadenylyl sulfate. The protein operates within sulfur metabolism; hydrogen sulfide biosynthesis; sulfite from sulfate: step 3/3. Functionally, catalyzes the formation of sulfite from phosphoadenosine 5'-phosphosulfate (PAPS) using thioredoxin as an electron donor. In Vibrio atlanticus (strain LGP32) (Vibrio splendidus (strain Mel32)), this protein is Phosphoadenosine 5'-phosphosulfate reductase.